Here is a 143-residue protein sequence, read N- to C-terminus: Transcriptional regulator MraZ (143 aa).

SpoVT-AbrB domains are found at residues 5 to 47 (TYTP…SARE) and 76 to 119 (ASDE…DSES).

It belongs to the MraZ family. As to quaternary structure, forms oligomers.

It is found in the cytoplasm. It localises to the nucleoid. The polypeptide is Transcriptional regulator MraZ (Micrococcus luteus (strain ATCC 4698 / DSM 20030 / JCM 1464 / CCM 169 / CCUG 5858 / IAM 1056 / NBRC 3333 / NCIMB 9278 / NCTC 2665 / VKM Ac-2230) (Micrococcus lysodeikticus)).